A 440-amino-acid chain; its full sequence is Protein ABHD8 (440 aa).

A disordered region spans residues 123–158 (DPAGSDGRSAPGSGSGSGSGSGSGGRRRRARRPKRT). The span at 124–134 (PAGSDGRSAPG) shows a compositional bias: low complexity. The segment covering 135–146 (SGSGSGSGSGSG) has biased composition (gly residues). A compositionally biased stretch (basic residues) spans 147–158 (GRRRRARRPKRT). Residues 178 to 280 (VLFFIHGVGG…HKVIMINGGG (103 aa)) form the AB hydrolase-1 domain. Residues Ser-253, Asp-371, and His-399 each act as charge relay system in the active site.

It belongs to the AB hydrolase superfamily. Interacts with NLRP3 (via NACHT and LLR domains); this interaction is enhanced in the presence of NLRP3 inflammasome inducers, such as ATP, nigericin, silica, or alum. Interacts with ZDHHC12.

The protein resides in the cytoplasm. Functionally, negatively regulates NLRP3-driven inflammation. Promotes NLRP3 degradation through the chaperone-mediated autophagy (CMA) pathway, hence attenuating inflammasome activation and IL1B secretion. Acts by recruiting palmitoyltransferase ZDHHC12 to NLRP3, facilitating NLRP3 palmitoylation and subsequent degradation. The sequence is that of Protein ABHD8 from Macaca fascicularis (Crab-eating macaque).